Consider the following 772-residue polypeptide: Endoplasmic reticulum membrane sensor NFE2L1 (772 aa).

A helical; Signal-anchor for type II membrane protein membrane pass occupies residues 7-24; that stretch reads YLTEGLLQFTILLSLIGV. The tract at residues 108-148 is disordered; that stretch reads DPEGSVSGSQPNSGLALESSSGLQDVTGPDNGVRESETEQG. Residues 113 to 131 show a composition bias toward polar residues; the sequence is VSGSQPNSGLALESSSGLQ. Residues 191–199 form a cholesterol recognition/amino acid consensus (CRAC) region region; that stretch reads VFDYSHRQK. 2 N-linked (GlcNAc...) asparagine glycosylation sites follow: Asn348 and Asn360. The tract at residues 379–383 is CPD; that stretch reads SPEVE. Residues Asn412 and Asn423 are each glycosylated (N-linked (GlcNAc...) asparagine). Disordered stretches follow at residues 470–532 and 582–613; these read EEEF…DSET and SALD…QMSR. The short motif at 476–480 is the Destruction motif element; it reads DSGLS. Positions 476 to 523 are enriched in low complexity; that stretch reads DSGLSLDSSHSPSSLSSSEGSSSSSSSSSSSSSSASSSASSSFSEEGA. At Ser528 the chain carries Phosphoserine; by CK2. The segment covering 598 to 613 has biased composition (basic and acidic residues); it reads GSKEKQADFLDKQMSR. Ser599 bears the Phosphoserine; by PKA mark. The bZIP domain occupies 654–717; it reads LIRDIRRRGK…RQMKQKVQSL (64 aa). The segment at 656 to 675 is basic motif; sequence RDIRRRGKNKMAAQNCRKRK. The leucine-zipper stretch occupies residues 682–696; sequence LERDVEDLQRDKARL.

This sequence belongs to the bZIP family. CNC subfamily. In terms of assembly, interacts with KEAP1. Interacts (via CPD region) with FBXW7; leading to its ubiquitination and degradation. Interacts with SYVN1/HRD1; leading to its ubiquitination and degradation. Interacts (when ubiquitinated) with DDI2; leading to its cleavage. As to quaternary structure, interacts (via the bZIP domain) with small MAF protein (MAFF, MAFG or MAFK); required for binding to antioxidant response elements (AREs) on DNA. Interacts (via Destruction motif) with BTRC; leading to its ubiquitination and degradation. Interacts with CEBPB; the heterodimer represses expression of DSPP during odontoblast differentiation. Interacts with MOTS-c, a peptide produced by the mitochondrially encoded 12S rRNA MT-RNR1. Post-translationally, cleaved at Leu-104 by the aspartyl protease DDI2 following retrotranslocation, releasing the protein from the endoplasmic reticulum membrane and forming the transcription factor NRF1 that translocates into the nucleus. Ubiquitination is prerequisite for cleavage by aspartyl protease DDI2. N-glycosylated in normal conditions, when it has a single-pass type II membrane protein topology, with the DNA-binding domain facing the endoplasmic reticulum lumen. Deglycosylated during retrotranslocation to the cytosolic side of the membrane, to have a single-pass type III membrane protein topology with the major part of the protein facing the cytosol. In terms of processing, ubiquitinated by the SCF(FBXW7) complex and SYVN1/HRD1, leading to its degradation by the proteasome. Ubiquitinated during retrotranslocation to the cytosolic side of the membrane: ubiquitination does not lead to degradation and is required for processing by the aspartyl protease DDI2 and subsequent release from the endoplasmic reticulum membrane. Post-translationally, phosphorylation by CK2 at Ser-528 inhibits transcription factor activity, possibly by affecting DNA-binding activity. Phosphorylation at Ser-599 is required for interaction with CEBPB. Ubiquitinated by the SCF(BTRC) complex in the nucleus, leading to its degradation by the proteasome.

The protein localises to the endoplasmic reticulum membrane. Its subcellular location is the nucleus. Functionally, endoplasmic reticulum membrane sensor that translocates into the nucleus in response to various stresses to act as a transcription factor. Constitutes a precursor of the transcription factor NRF1. Able to detect various cellular stresses, such as cholesterol excess, oxidative stress or proteasome inhibition. In response to stress, it is released from the endoplasmic reticulum membrane following cleavage by the protease DDI2 and translocates into the nucleus to form the transcription factor NRF1. Acts as a key sensor of cholesterol excess: in excess cholesterol conditions, the endoplasmic reticulum membrane form of the protein directly binds cholesterol via its CRAC motif, preventing cleavage and release of the transcription factor NRF1, thereby allowing expression of genes promoting cholesterol removal, such as CD36. Involved in proteasome homeostasis: in response to proteasome inhibition, it is released from the endoplasmic reticulum membrane, translocates to the nucleus and activates expression of genes encoding proteasome subunits. In terms of biological role, CNC-type bZIP family transcription factor that translocates to the nucleus and regulates expression of target genes in response to various stresses. Heterodimerizes with small-Maf proteins (MAFF, MAFG or MAFK) and binds DNA motifs including the antioxidant response elements (AREs), which regulate expression of genes involved in oxidative stress response. Activates or represses expression of target genes, depending on the context. Plays a key role in cholesterol homeostasis by acting as a sensor of cholesterol excess: in low cholesterol conditions, translocates into the nucleus and represses expression of genes involved in defense against cholesterol excess, such as CD36. In excess cholesterol conditions, the endoplasmic reticulum membrane form of the protein directly binds cholesterol via its CRAC motif, preventing cleavage and release of the transcription factor NRF1, thereby allowing expression of genes promoting cholesterol removal. Critical for redox balance in response to oxidative stress: acts by binding the AREs motifs on promoters and mediating activation of oxidative stress response genes, such as GCLC, GCLM, GSS, MT1 and MT2. Plays an essential role during fetal liver hematopoiesis: probably has a protective function against oxidative stress and is involved in lipid homeostasis in the liver. Involved in proteasome homeostasis: in response to proteasome inhibition, mediates the 'bounce-back' of proteasome subunits by translocating into the nucleus and activating expression of genes encoding proteasome subunits. Also involved in regulating glucose flux. Together with CEBPB; represses expression of DSPP during odontoblast differentiation. In response to ascorbic acid induction, activates expression of SP7/Osterix in osteoblasts. The chain is Endoplasmic reticulum membrane sensor NFE2L1 (NFE2L1) from Homo sapiens (Human).